The following is a 122-amino-acid chain: ATP-dependent Clp protease adapter protein ClpS (122 aa).

Positions 1-33 (MHAPSQIRLTFNQDHPEPHEHEDEGAGLAVQES) are disordered. Basic and acidic residues predominate over residues 14–24 (DHPEPHEHEDE).

It belongs to the ClpS family. As to quaternary structure, binds to the N-terminal domain of the chaperone ClpA.

Functionally, involved in the modulation of the specificity of the ClpAP-mediated ATP-dependent protein degradation. The polypeptide is ATP-dependent Clp protease adapter protein ClpS (Pseudomonas aeruginosa (strain ATCC 15692 / DSM 22644 / CIP 104116 / JCM 14847 / LMG 12228 / 1C / PRS 101 / PAO1)).